The following is a 229-amino-acid chain: DNA mismatch repair protein MutH (229 aa).

The protein belongs to the MutH family.

The protein localises to the cytoplasm. Functionally, sequence-specific endonuclease that cleaves unmethylated GATC sequences. It is involved in DNA mismatch repair. This is DNA mismatch repair protein MutH from Escherichia coli O6:K15:H31 (strain 536 / UPEC).